Reading from the N-terminus, the 967-residue chain is RNA polymerase II C-terminal domain phosphatase-like 1 (967 aa).

The short motif at 38 to 41 (RKKK) is the Nuclear localization signal (NLS) element. An FCP1 homology domain is found at 151–401 (LNLRCLGIVF…TPVLCVARNV (251 aa)). Disordered stretches follow at residues 548–611 (SEPS…VQSR) and 643–712 (MEKH…RNSD). The span at 590 to 603 (PSEPSFPQRPPVQA) shows a compositional bias: pro residues. Residues 665–684 (RMLHENRRPPKESLRRDEQL) show a composition bias toward basic and acidic residues. 2 DRBM domains span residues 724 to 792 (TETS…NLAD) and 855 to 925 (GSIT…SVRS). A disordered region spans residues 928 to 967 (GQPLHKRQGSPRSFGGMSNKRLKPDFQRSLQRMPSSGRYS). The tract at residues 945–967 (SNKRLKPDFQRSLQRMPSSGRYS) is required for nuclear localization (NLS). The Nuclear localization signal (NLS) motif lies at 947 to 951 (KRLKP). Over residues 955–967 (RSLQRMPSSGRYS) the composition is skewed to polar residues.

Interacts with FREE1, ANAC019, MYB3, MYB4 and MYB32. Binds to DMS3. Interacts with RCF3. Interacts with RS40 and RS41. Interacts with EIF4A3. Interacts with UPF3. It depends on Mg(2+) as a cofactor. The cofactor is Co(2+). Mn(2+) serves as cofactor. As to expression, expressed at very low levels in roots, leaves, stems, flowers and siliques.

The protein resides in the nucleus. The protein localises to the nucleus speckle. It carries out the reaction O-phospho-L-seryl-[protein] + H2O = L-seryl-[protein] + phosphate. The catalysed reaction is O-phospho-L-threonyl-[protein] + H2O = L-threonyl-[protein] + phosphate. Its function is as follows. Processively dephosphorylates 'Ser-5' but not 'Ser-2' of the heptad repeats YSPTSPS in the C-terminal domain of the largest RNA polymerase II subunit (RPB1). This promotes the activity of RNA polymerase II. Together with CPL2, required for male gametes fertility. Multifunctional regulator that modulates plant growth, stress, and phytohormones responses. Negative regulator of stress gene transcription involved in abscisic acid (ABA) mediated and jasmonic acid (JA) mediated signaling pathways, NaCl, osmotic stress, wounding, and cold resistance. Negatively regulates the expression of jasmonic acid (JA) biosynthetic genes in response to wounding. Forms a complex with RCF3 that modulates co-transcriptional processes such as mRNA capping and polyadenylation, and functions to repress stress-inducible gene expression. Dephosphorylates RCF3. Involved in the dephosphorylation of EIF4A3. This dephosphorylation retains EIF4A3 in the nucleus and limits its accumulation in the cytoplasm. Is essential for the degradation of the nonsense-mediated mRNA decay (NMD) transcripts. This chain is RNA polymerase II C-terminal domain phosphatase-like 1, found in Arabidopsis thaliana (Mouse-ear cress).